The following is a 56-amino-acid chain: Large ribosomal subunit protein bL33 (56 aa).

It belongs to the bacterial ribosomal protein bL33 family.

In Tropheryma whipplei (strain TW08/27) (Whipple's bacillus), this protein is Large ribosomal subunit protein bL33.